Here is a 314-residue protein sequence, read N- to C-terminus: Ribosomal protein L11 methyltransferase (314 aa).

The S-adenosyl-L-methionine site is built by T163, G184, D206, and N248.

The protein belongs to the methyltransferase superfamily. PrmA family.

Its subcellular location is the cytoplasm. It carries out the reaction L-lysyl-[protein] + 3 S-adenosyl-L-methionine = N(6),N(6),N(6)-trimethyl-L-lysyl-[protein] + 3 S-adenosyl-L-homocysteine + 3 H(+). Functionally, methylates ribosomal protein L11. The protein is Ribosomal protein L11 methyltransferase of Lactobacillus acidophilus (strain ATCC 700396 / NCK56 / N2 / NCFM).